A 415-amino-acid polypeptide reads, in one-letter code: tRNA(Met) cytidine acetate ligase (415 aa).

Residues 7–20 (VVEYNPFHNGHRYH), Gly-101, Asn-162, and 187–188 (RI) contribute to the ATP site.

It belongs to the TmcAL family.

It localises to the cytoplasm. The enzyme catalyses cytidine(34) in elongator tRNA(Met) + acetate + ATP = N(4)-acetylcytidine(34) in elongator tRNA(Met) + AMP + diphosphate. Functionally, catalyzes the formation of N(4)-acetylcytidine (ac(4)C) at the wobble position of elongator tRNA(Met), using acetate and ATP as substrates. First activates an acetate ion to form acetyladenylate (Ac-AMP) and then transfers the acetyl group to tRNA to form ac(4)C34. In Bacillus velezensis (strain DSM 23117 / BGSC 10A6 / LMG 26770 / FZB42) (Bacillus amyloliquefaciens subsp. plantarum), this protein is tRNA(Met) cytidine acetate ligase.